Reading from the N-terminus, the 77-residue chain is uncharacterized protein (77 aa).

A Peptidase A1 domain is found at 1 to 77 (MAFERQGKIE…VAILDGKLVW (77 aa)).

This is an uncharacterized protein from Saccharomyces cerevisiae (strain ATCC 204508 / S288c) (Baker's yeast).